Consider the following 726-residue polypeptide: Transferrin (726 aa).

The signal sequence occupies residues 1–16; sequence MLLCLTLLFSASAVLA. 2 consecutive Transferrin-like domains span residues 29-367 and 374-719; these read YKVC…ERDT and VRFC…VIRA. Intrachain disulfides connect Cys-32/Cys-63 and Cys-41/Cys-54. Fe(3+) is bound by residues Asp-78 and Tyr-111. Disulfide bonds link Cys-135–Cys-231, Cys-184–Cys-210, Cys-207–Cys-216, and Cys-274–Cys-287. Positions 137, 141, 143, and 144 each coordinate hydrogencarbonate. A glycan (N-linked (GlcNAc...) asparagine) is linked at Asn-162. Tyr-225 lines the Fe(3+) pocket. N-linked (GlcNAc...) asparagine glycans are attached at residues Asn-337 and Asn-358. Intrachain disulfides connect Cys-377/Cys-414 and Cys-387/Cys-405. Fe(3+) contacts are provided by Asp-429 and Tyr-457. Cys-481 and Cys-562 are disulfide-bonded. The hydrogencarbonate site is built by Thr-483, Arg-487, Ala-489, and Gly-490. Tyr-573 and His-642 together coordinate Fe(3+).

This sequence belongs to the transferrin family.

It localises to the secreted. Transferrins are iron binding transport proteins which bind Fe(3+) ion in association with the binding of an anion, usually bicarbonate. The chain is Transferrin from Blaberus discoidalis (Tropical cockroach).